A 343-amino-acid chain; its full sequence is Polyprenyl transferase spyF (343 aa).

8 consecutive transmembrane segments (helical) span residues 38–58, 62–82, 92–112, 138–158, 170–190, 241–261, 273–293, and 311–331; these read WLAVFSGGVSLPILIGNSHPL, VSVWATLLAGANQIATHPASI, LLCLICGYIFCGAGMVWNDWI, GFIWMMVHVAAMIPVTISTIL, LYIYPQYFLGFSLAWPGAIGW, AYVAAGSRIHMFLVILAGLVL, SGWLWASWMCVWALSFVHQLL, and FALGVWTIVACAAELGLSSGM.

Belongs to the UbiA prenyltransferase family. Mg(2+) serves as cofactor.

The protein localises to the membrane. It carries out the reaction triacetate lactone + (2E,6E,10E)-geranylgeranyl diphosphate = (2E,6E,10E)-geranylgeranyl-triacetate lactone + diphosphate. It functions in the pathway secondary metabolite biosynthesis; terpenoid biosynthesis. In terms of biological role, polyprenyl transferase; part of the gene cluster that mediates the biosynthesis of meroterpenoids called sartorypyrones. Within the pathway, spyF catalyzes the prenylation of triacetic acid lactone (TAL) to produce geranylgeranyl-triacetate lactone. The biosynthesis of sartorypyrones begins with the production of triacetic acid lactone (TAL) by the NR-PKS spyA using one molecule of acetyl-CoA and two molecules of malonyl-CoA. The prenyltransferase spyF then conjugates geranylgeranyl pyrophosphate (GGPP) to TAL to form geranylgeranyl-triacetate lactone, for which the pathway-specific geranylgeranyl pyrophosphate synthase (GGPS) spyE is required to provide GGPP. Subsequently, geranylgeranyl-triacetate lactone is epoxidized at the terminal olein by the FAD-dependent monooxygenase spyC, followed by cyclization of the terpenoid component catalyzed by the terpene cyclase spyD to produce both the bicyclic sartorypyrone F and the monocyclic sartorypyrone D. Finally, the last step of the biosynthesis involves the acetylation of the meroterpenoids sartorypyrones D and F by the acetyltransferase SpyB to produce sartorypyrones A and G, respectively. This chain is Polyprenyl transferase spyF, found in Aspergillus fumigatus (strain ATCC MYA-4609 / CBS 101355 / FGSC A1100 / Af293) (Neosartorya fumigata).